An 86-amino-acid polypeptide reads, in one-letter code: RNA-binding protein Hfq (86 aa).

The 60-residue stretch at 9-68 (DPYLNTLRKEKVPVSIYLVNGIKLQGSIESFDQFVVLLKNTVSQMVYKHAISTVVPARPV) folds into the Sm domain. Positions 66-86 (RPVRLPSPSDSEHGDSEPGNA) are disordered. Residues 75–86 (DSEHGDSEPGNA) show a composition bias toward basic and acidic residues.

This sequence belongs to the Hfq family. As to quaternary structure, homohexamer.

Functionally, RNA chaperone that binds small regulatory RNA (sRNAs) and mRNAs to facilitate mRNA translational regulation in response to envelope stress, environmental stress and changes in metabolite concentrations. Also binds with high specificity to tRNAs. The polypeptide is RNA-binding protein Hfq (Pseudomonas putida (strain W619)).